A 313-amino-acid chain; its full sequence is B3 domain-containing protein At2g31720 (313 aa).

The disordered stretch occupies residues 80–110 (KNQDPEQNPNRVASSPSSCHLESKRPQKVVS). A compositionally biased stretch (polar residues) spans 84-99 (PEQNPNRVASSPSSCH). The TF-B3 DNA-binding region spans 169 to 267 (WKQILDMDFL…MLFFAFVLSD (99 aa)).

The protein resides in the nucleus. This is B3 domain-containing protein At2g31720 (ARF70) from Arabidopsis thaliana (Mouse-ear cress).